The chain runs to 237 residues: Sugar fermentation stimulation protein homolog (237 aa).

The protein belongs to the SfsA family.

The chain is Sugar fermentation stimulation protein homolog from Pseudomonas savastanoi pv. phaseolicola (strain 1448A / Race 6) (Pseudomonas syringae pv. phaseolicola (strain 1448A / Race 6)).